The primary structure comprises 132 residues: Small ribosomal subunit protein uS8 (132 aa).

The protein belongs to the universal ribosomal protein uS8 family. Part of the 30S ribosomal subunit. Contacts proteins S5 and S12.

In terms of biological role, one of the primary rRNA binding proteins, it binds directly to 16S rRNA central domain where it helps coordinate assembly of the platform of the 30S subunit. The sequence is that of Small ribosomal subunit protein uS8 from Clostridium perfringens (strain ATCC 13124 / DSM 756 / JCM 1290 / NCIMB 6125 / NCTC 8237 / Type A).